The following is a 93-amino-acid chain: Insertion element ISR1 uncharacterized 11 kDa protein A1 (93 aa).

Disordered stretches follow at residues 14-33 (RRARTTRSARPAEGPGQERR) and 68-93 (RRRAPQASDGHAATVTCRWRPTSAGR).

This is Insertion element ISR1 uncharacterized 11 kDa protein A1 from Rhizobium sp.